A 291-amino-acid polypeptide reads, in one-letter code: ATP synthase subunit a (291 aa).

7 helical membrane-spanning segments follow: residues Leu-50 to Val-70, Ile-108 to Ile-128, Pro-129 to Pro-149, Asp-161 to Ile-181, Pro-203 to Ala-223, Leu-241 to Trp-261, and Ala-262 to Val-282.

The protein belongs to the ATPase A chain family. In terms of assembly, F-type ATPases have 2 components, CF(1) - the catalytic core - and CF(0) - the membrane proton channel. CF(1) has five subunits: alpha(3), beta(3), gamma(1), delta(1), epsilon(1). CF(0) has three main subunits: a(1), b(2) and c(9-12). The alpha and beta chains form an alternating ring which encloses part of the gamma chain. CF(1) is attached to CF(0) by a central stalk formed by the gamma and epsilon chains, while a peripheral stalk is formed by the delta and b chains.

The protein resides in the cell inner membrane. In terms of biological role, key component of the proton channel; it plays a direct role in the translocation of protons across the membrane. The protein is ATP synthase subunit a of Acinetobacter baumannii (strain AB307-0294).